Consider the following 1162-residue polypeptide: Leptin receptor (1162 aa).

The signal sequence occupies residues 1–21; it reads MMCQKFYVVLLHWEFLYVIAA. Topologically, residues 22–839 are extracellular; that stretch reads LNLAYPISPW…AIDKQQNDAG (818 aa). 5 disulfide bridges follow: cysteine 37-cysteine 90, cysteine 89-cysteine 99, cysteine 131-cysteine 142, cysteine 186-cysteine 195, and cysteine 188-cysteine 193. Residues asparagine 41, asparagine 56, asparagine 73, and asparagine 98 are each glycosylated (N-linked (GlcNAc...) asparagine). N-linked (GlcNAc...) asparagine glycosylation is present at asparagine 187. The region spanning 238–331 is the Fibronectin type-III 1 domain; it reads PPLGLHMEVT…SPQVFTTQDV (94 aa). 2 N-linked (GlcNAc...) asparagine glycosylation sites follow: asparagine 275 and asparagine 345. The region spanning 329-427 is the Ig-like domain; sequence QDVVYFPPKI…HRYAELYVID (99 aa). 2 disulfide bridges follow: cysteine 350–cysteine 410 and cysteine 411–cysteine 416. Asparagine 431 carries N-linked (GlcNAc...) asparagine glycosylation. 3 disulfide bridges follow: cysteine 434/cysteine 445, cysteine 471/cysteine 526, and cysteine 486/cysteine 496. Residues 465 to 482 form a leptin-binding region; the sequence is HRRSLYCPDSPSIHPTSE. Asparagine 514, asparagine 622, asparagine 657, asparagine 668, asparagine 686, asparagine 695, asparagine 698, and asparagine 726 each carry an N-linked (GlcNAc...) asparagine glycan. 3 consecutive Fibronectin type-III domains span residues 537–632, 637–729, and 738–832; these read PPSN…TLVM, PMRG…NLTF, and AVES…DAID. Residues 620–624 carry the WSXWS motif motif; the sequence is WSNWS. The chain crosses the membrane as a helical span at residues 840-860; the sequence is LYVIVPIIISSCVLLLGTLLI. Residues 861 to 1162 lie on the Cytoplasmic side of the membrane; sequence SHQRMKKLFW…MENKMCDLTV (302 aa). Positions 869–877 match the Box 1 motif motif; the sequence is FWDDVPNPK. At serine 880 the chain carries Phosphoserine. The segment at 891 to 896 is required for JAK2 activation; the sequence is ETFEHL. The tract at residues 896–904 is required for STAT3 phosphorylation; that stretch reads LFTKHAESV. The residue at position 985 (tyrosine 985) is a Phosphotyrosine; by JAK2. Phosphotyrosine is present on tyrosine 1077. Tyrosine 1138 is subject to Phosphotyrosine; by JAK2.

It belongs to the type I cytokine receptor family. Type 2 subfamily. As to quaternary structure, present as a mixture of monomers and dimers. The phosphorylated receptor binds a number of SH2 domain-containing proteins such as JAK2, STAT3, PTPN11, and SOCS3. Interaction with SOCS3 inhibits JAK/STAT signaling and MAPK cascade. Post-translationally, on ligand binding, phosphorylated on two conserved C-terminal tyrosine residues (isoform B only) by JAK2. Tyr-985 is required for complete binding and activation of PTPN11, ERK/FOS activation,for interaction with SOCS3 and SOCS3 mediated inhibition of leptin signaling. Phosphorylation on Tyr-1138 is required for STAT3 binding/activation. Phosphorylation of Tyr-1077 has a more accessory role. As to expression, isoform A: highest level of expression in lung and kidney, also present in heart, brain, spleen, liver, muscle, choroid plexus and hypothalamus. Isoform B: highest levels of expression in hypothalamus and lower levels in brain, testes and adipose tissue. Expressed by neurons of the parabrachial nucleus. Expressed by peripheral blood mononuclear cells and CD4(+) T-cells. Isoform E: expressed in adipose tissue, liver, hypothalamus, cerebral microvessels, heart, and testes.

Its subcellular location is the cell membrane. It is found in the basolateral cell membrane. It localises to the secreted. Its function is as follows. Receptor for hormone LEP/leptin. On ligand binding, mediates LEP central and peripheral effects through the activation of different signaling pathways such as JAK2/STAT3 and MAPK cascade/FOS. In the hypothalamus, LEP acts as an appetite-regulating factor that induces a decrease in food intake and an increase in energy consumption by inducing anorexinogenic factors and suppressing orexigenic neuropeptides, also regulates bone mass and secretion of hypothalamo-pituitary-adrenal hormones. In the periphery, increases basal metabolism, influences reproductive function, regulates pancreatic beta-cell function and insulin secretion, is pro-angiogenic and affects innate and adaptive immunity. Control of energy homeostasis and melanocortin production (stimulation of POMC and full repression of AgRP transcription) is mediated by STAT3 signaling, whereas distinct signals regulate NPY and the control of fertility, growth and glucose homeostasis. Involved in the regulation of counter-regulatory response to hypoglycemia by inhibiting neurons of the parabrachial nucleus. Has a specific effect on T lymphocyte responses, differentially regulating the proliferation of naive and memory T-cells. Leptin increases Th1 and suppresses Th2 cytokine production. In terms of biological role, may transport LEP across the blood-brain barrier. Binds LEP and mediates LEP endocytosis. Does not induce phosphorylation of and activate STAT3. Functionally, antagonizes Isoform A and isoform B-mediated LEP binding and endocytosis. The sequence is that of Leptin receptor (Lepr) from Mus musculus (Mouse).